Consider the following 99-residue polypeptide: Malonate decarboxylase acyl carrier protein (99 aa).

S25 bears the O-(phosphoribosyl dephospho-coenzyme A)serine mark.

The protein belongs to the MdcC family. In terms of processing, covalently binds the prosthetic group of malonate decarboxylase.

The protein localises to the cytoplasm. Functionally, subunit of malonate decarboxylase, it is an acyl carrier protein to which acetyl and malonyl thioester residues are bound via a 2'-(5''-phosphoribosyl)-3'-dephospho-CoA prosthetic group and turn over during the catalytic mechanism. This Pseudomonas fluorescens (strain ATCC BAA-477 / NRRL B-23932 / Pf-5) protein is Malonate decarboxylase acyl carrier protein.